Consider the following 500-residue polypeptide: Glycerol kinase (500 aa).

T16 is an ADP binding site. Residues T16 and T17 each contribute to the ATP site. T16 contacts sn-glycerol 3-phosphate. Residue R20 coordinates ADP. 4 residues coordinate sn-glycerol 3-phosphate: R86, E87, Y138, and D243. Residues R86, E87, Y138, D243, and Q244 each coordinate glycerol. ADP is bound by residues T265 and G313. Residues T265, G313, Q317, and G414 each contribute to the ATP site. G414 and N418 together coordinate ADP.

Belongs to the FGGY kinase family.

The catalysed reaction is glycerol + ATP = sn-glycerol 3-phosphate + ADP + H(+). It participates in polyol metabolism; glycerol degradation via glycerol kinase pathway; sn-glycerol 3-phosphate from glycerol: step 1/1. With respect to regulation, inhibited by fructose 1,6-bisphosphate (FBP). In terms of biological role, key enzyme in the regulation of glycerol uptake and metabolism. Catalyzes the phosphorylation of glycerol to yield sn-glycerol 3-phosphate. The chain is Glycerol kinase from Nostoc sp. (strain PCC 7120 / SAG 25.82 / UTEX 2576).